Here is a 189-residue protein sequence, read N- to C-terminus: Nuclear distribution protein nudE homolog 1 (189 aa).

Positions 4–121 form a coiled coil; it reads NLDLETAIQI…LRVSKEEATS (118 aa). The segment covering 114 to 126 has biased composition (basic and acidic residues); it reads VSKEEATSGETRR. A disordered region spans residues 114–139; that stretch reads VSKEEATSGETRRNTRSLPSQNKKMK.

Belongs to the nudE family. Self-associates. Interacts with PAC1.

The protein resides in the nucleus. Its subcellular location is the cytoplasm. It localises to the cytoskeleton. Its function is as follows. Required for nuclear migration to the bud neck during cell division. Targets cytoplasmic dynein to microtubule plus ends thereby promoting dynein-mediated microtubule sliding along the bud cortex and consequently the movement of the mitotic spindle to the bud neck. The chain is Nuclear distribution protein nudE homolog 1 (NDL1) from Saccharomyces cerevisiae (strain ATCC 204508 / S288c) (Baker's yeast).